We begin with the raw amino-acid sequence, 440 residues long: Dynein axonemal assembly factor 11 (440 aa).

LRR repeat units lie at residues 20–43 (IFSL…HKWC), 44–65 (RDLK…VGRL), 66–89 (KKLE…GCES), and 90–110 (LQKL…ETLK). An LRRCT domain is found at 128 to 146 (YQGYRQYVVATVPQLQSLD). The span at 178–192 (EEREKQKSNANEHPE) shows a compositional bias: basic and acidic residues. Disordered regions lie at residues 178-267 (EERE…RTLI) and 363-440 (PKKR…PPLM). Residues 193-211 (INQSLSESQNGTQQYPESS) are compositionally biased toward polar residues. Basic and acidic residues predominate over residues 236-259 (SRLEAHRHLEEKRRANEKEKEKPK). Residues 276-374 (VNEPKLDFSL…KRTIRPTSVT (99 aa)) form the CS domain. Positions 369 to 378 (RPTSVTSNQN) are enriched in polar residues. 2 stretches are compositionally biased toward basic and acidic residues: residues 379 to 392 (NKKD…RELL) and 420 to 431 (GLEERPVSKDFV).

Belongs to the tilB family. In terms of assembly, interacts with dvl2. Interacts with kur. Expressed in kinocilia of hair cells.

Its subcellular location is the cytoplasm. It localises to the dynein axonemal particle. The protein resides in the cell projection. The protein localises to the cilium. Functionally, plays a crucial role in regulating cilia motility in pronephric tubules, cloaca and neural tube. Required for establishing left-right asymmetry of the body plan; controls cell fate and convergent extension (CE) movements during gastrulation, respectively, via the Wnt and the planar cell polarity (PCP) signaling pathways. Required for the proper development of renal glomeruli and tubules. The polypeptide is Dynein axonemal assembly factor 11 (dnaaf11) (Danio rerio (Zebrafish)).